The following is a 195-amino-acid chain: ATP-dependent Clp protease proteolytic subunit 2 (195 aa).

Serine 98 functions as the Nucleophile in the catalytic mechanism. Histidine 123 is an active-site residue.

It belongs to the peptidase S14 family. In terms of assembly, fourteen ClpP subunits assemble into 2 heptameric rings which stack back to back to give a disk-like structure with a central cavity, resembling the structure of eukaryotic proteasomes.

Its subcellular location is the cytoplasm. The enzyme catalyses Hydrolysis of proteins to small peptides in the presence of ATP and magnesium. alpha-casein is the usual test substrate. In the absence of ATP, only oligopeptides shorter than five residues are hydrolyzed (such as succinyl-Leu-Tyr-|-NHMec, and Leu-Tyr-Leu-|-Tyr-Trp, in which cleavage of the -Tyr-|-Leu- and -Tyr-|-Trp bonds also occurs).. Its function is as follows. Cleaves peptides in various proteins in a process that requires ATP hydrolysis. Has a chymotrypsin-like activity. Plays a major role in the degradation of misfolded proteins. ClpXP2 is involved in the complete degradation of the Site-2 clipped anti-sigma-W factor RsiW. This results in the release of SigW and the transcription activation of the genes under the control of the sigma-W factor. The polypeptide is ATP-dependent Clp protease proteolytic subunit 2 (Shouchella clausii (strain KSM-K16) (Alkalihalobacillus clausii)).